The sequence spans 165 residues: 2-halobenzoate 1,2-dioxygenase small subunit (165 aa).

The protein belongs to the bacterial ring-hydroxylating dioxygenase beta subunit family. As to quaternary structure, heterohexamer of 3 large (CbdA) subunits and 3 small (CbdB) subunits. The heterohexamer is part of 2-halobenzoate dioxygenase two component enzyme system. The other component is a NADH:acceptor reductase (CdbC).

It catalyses the reaction a 2-halobenzoate + NADH + O2 + H(+) = a halide anion + catechol + CO2 + NAD(+). It functions in the pathway xenobiotic degradation; benzoate degradation via CoA ligation. In terms of biological role, component of 2-halobenzoate dioxygenase multicomponent enzyme system which catalyzes the incorporation of both atoms of molecular oxygen into 2-halobenzoate to form catechol. In Burkholderia cepacia (Pseudomonas cepacia), this protein is 2-halobenzoate 1,2-dioxygenase small subunit (cbdB).